A 767-amino-acid chain; its full sequence is ATPase family gene 2 protein homolog B (767 aa).

M1 bears the N-acetylmethionine mark. ATP contacts are provided by residues 241-248 (GPPGVGKT) and 507-514 (GPPGCAKT).

This sequence belongs to the AAA ATPase family. AFG2 subfamily. In terms of assembly, part of the 55LCC heterohexameric ATPase complex composed at least of AIRIM, AFG2A, AFG2B and CINP. Associates with pre-60S ribosomal particles.

The protein localises to the cytoplasm. It is found in the cytoskeleton. Its subcellular location is the spindle. The protein resides in the nucleus. The catalysed reaction is ATP + H2O = ADP + phosphate + H(+). With respect to regulation, in the context of 55LCC heterohexameric ATPase complex, the ATPase activity is stimulated by DNA binding and inhibited in presence of RNA. In terms of biological role, ATP-dependent chaperone part of the 55LCC heterohexameric ATPase complex which is chromatin-associated and promotes replisome proteostasis to maintain replication fork progression and genome stability. Required for replication fork progression, sister chromatid cohesion, and chromosome stability. The ATPase activity is specifically enhanced by replication fork DNA and is coupled to cysteine protease-dependent cleavage of replisome substrates in response to replication fork damage. Uses ATPase activity to process replisome substrates in S-phase, facilitating their proteolytic turnover from chromatin to ensure DNA replication and mitotic fidelity. Plays an essential role in the cytoplasmic maturation steps of pre-60S ribosomal particles by promoting the release of shuttling protein RSL24D1/RLP24 from the pre-ribosomal particles. The sequence is that of ATPase family gene 2 protein homolog B (AFG2B) from Bos taurus (Bovine).